The sequence spans 389 residues: Probable tRNA sulfurtransferase (389 aa).

Residues 57-165 (DEALDRLSKI…EDETYIYHRV (109 aa)) form the THUMP domain. ATP contacts are provided by residues 183–184 (LL), Lys-267, Gly-289, and Gln-298.

The protein belongs to the ThiI family.

The protein localises to the cytoplasm. The catalysed reaction is [ThiI sulfur-carrier protein]-S-sulfanyl-L-cysteine + a uridine in tRNA + 2 reduced [2Fe-2S]-[ferredoxin] + ATP + H(+) = [ThiI sulfur-carrier protein]-L-cysteine + a 4-thiouridine in tRNA + 2 oxidized [2Fe-2S]-[ferredoxin] + AMP + diphosphate. It carries out the reaction [ThiS sulfur-carrier protein]-C-terminal Gly-Gly-AMP + S-sulfanyl-L-cysteinyl-[cysteine desulfurase] + AH2 = [ThiS sulfur-carrier protein]-C-terminal-Gly-aminoethanethioate + L-cysteinyl-[cysteine desulfurase] + A + AMP + 2 H(+). The protein operates within cofactor biosynthesis; thiamine diphosphate biosynthesis. In terms of biological role, catalyzes the ATP-dependent transfer of a sulfur to tRNA to produce 4-thiouridine in position 8 of tRNAs, which functions as a near-UV photosensor. Also catalyzes the transfer of sulfur to the sulfur carrier protein ThiS, forming ThiS-thiocarboxylate. This is a step in the synthesis of thiazole, in the thiamine biosynthesis pathway. The sulfur is donated as persulfide by IscS. The polypeptide is Probable tRNA sulfurtransferase (Methanothermobacter thermautotrophicus (strain ATCC 29096 / DSM 1053 / JCM 10044 / NBRC 100330 / Delta H) (Methanobacterium thermoautotrophicum)).